The chain runs to 222 residues: Probable transaldolase 2 (222 aa).

The active-site Schiff-base intermediate with substrate is Lys-90.

It belongs to the transaldolase family. Type 3B subfamily.

Its subcellular location is the cytoplasm. It carries out the reaction D-sedoheptulose 7-phosphate + D-glyceraldehyde 3-phosphate = D-erythrose 4-phosphate + beta-D-fructose 6-phosphate. It functions in the pathway carbohydrate degradation; pentose phosphate pathway; D-glyceraldehyde 3-phosphate and beta-D-fructose 6-phosphate from D-ribose 5-phosphate and D-xylulose 5-phosphate (non-oxidative stage): step 2/3. Its function is as follows. Transaldolase is important for the balance of metabolites in the pentose-phosphate pathway. This is Probable transaldolase 2 from Bacillus anthracis.